The primary structure comprises 459 residues: Ribulose bisphosphate carboxylase large chain (459 aa).

Lys-4 carries the post-translational modification N6,N6,N6-trimethyllysine. Substrate is bound by residues Asn-113 and Thr-163. The active-site Proton acceptor is the Lys-165. Lys-167 contacts substrate. Mg(2+)-binding residues include Lys-191, Asp-193, and Glu-194. Lys-191 is modified (N6-carboxylysine). Residue His-284 is the Proton acceptor of the active site. 3 residues coordinate substrate: Arg-285, His-317, and Ser-369.

The protein belongs to the RuBisCO large chain family. Type I subfamily. As to quaternary structure, heterohexadecamer of 8 large chains and 8 small chains; disulfide-linked. The disulfide link is formed within the large subunit homodimers. Mg(2+) is required as a cofactor. The disulfide bond which can form in the large chain dimeric partners within the hexadecamer appears to be associated with oxidative stress and protein turnover.

The protein localises to the plastid. It is found in the chloroplast. The enzyme catalyses 2 (2R)-3-phosphoglycerate + 2 H(+) = D-ribulose 1,5-bisphosphate + CO2 + H2O. The catalysed reaction is D-ribulose 1,5-bisphosphate + O2 = 2-phosphoglycolate + (2R)-3-phosphoglycerate + 2 H(+). Functionally, ruBisCO catalyzes two reactions: the carboxylation of D-ribulose 1,5-bisphosphate, the primary event in carbon dioxide fixation, as well as the oxidative fragmentation of the pentose substrate in the photorespiration process. Both reactions occur simultaneously and in competition at the same active site. In Roridula gorgonias (South African fly bush), this protein is Ribulose bisphosphate carboxylase large chain.